A 408-amino-acid chain; its full sequence is Putative gustatory receptor 58b (408 aa).

Topologically, residues 1–44 (MLHPKLGRVMNVVYYHSVVFALMSTTLRIRSCRKCLRLEKVSRT) are cytoplasmic. Residues 45-65 (YTIYSFFVGIFLFLNLYFMVP) traverse the membrane as a helical segment. At 66–82 (RIMEDGYMKYNIVLQWN) the chain is on the extracellular side. The chain crosses the membrane as a helical span at residues 83-103 (FFVMLFLRAIAVVSCYGTLWL). At 104–150 (KRHKIIQLYKYSLIYWKRFGHITRAIVDKKELLDLQESLARIMIRKI) the chain is on the cytoplasmic side. A helical transmembrane segment spans residues 151–171 (ILLYSAFLCSTVLQYQLLSVI). Over 172–193 (NPQIFLAFCARLTHFLHFLCVK) the chain is Extracellular. Residues 194–214 (MGFFGVLVLLNHQFLVIHLAI) form a helical membrane-spanning segment. The Cytoplasmic portion of the chain corresponds to 215–245 (NALHGRKARKKWKALRSVAAMHLKTLRLARR). A helical membrane pass occupies residues 246–266 (IFDMFDIANATVFINMFMTAI). The Extracellular segment spans residues 267 to 284 (NILYHAVQYSNSSIKSNG). Asparagine 277 carries N-linked (GlcNAc...) asparagine glycosylation. The chain crosses the membrane as a helical span at residues 285-305 (WGILFGNGLIVFNFWGTMALM). Over 306–364 (EMLDSVVTSCNNTGQQLRQLSDLPKVGPKMQRELDVFTMQLRQNRLVYKICGIVELDKP) the chain is Cytoplasmic. A helical transmembrane segment spans residues 365-385 (ACLSYIGSILSNVIILMQFDL). Over 386–408 (RRQRQPINDRQYLIHLMKNKTKV) the chain is Extracellular. Asparagine 404 carries an N-linked (GlcNAc...) asparagine glycan.

This sequence belongs to the insect chemoreceptor superfamily. Gustatory receptor (GR) family. Gr22e subfamily. Expressed in the adult labellar chemosensory neurons, labral sense organ and thorax. In larvae, is in neurons of the terminal external chemosensory organ as well as in the dorsal pharyngeal sense organ.

The protein localises to the cell membrane. Its function is as follows. Probable gustatory receptor which mediates acceptance or avoidance behavior, depending on its substrates. This Drosophila melanogaster (Fruit fly) protein is Putative gustatory receptor 58b (Gr58b).